The primary structure comprises 93 residues: uncharacterized protein (93 aa).

The protein belongs to the SIMIBI class G3E GTPase family. ArgK/MeaB subfamily.

This is an uncharacterized protein from Streptomyces virginiae (Streptomyces cinnamonensis).